The primary structure comprises 171 residues: Putative adenylate kinase (171 aa).

The ATP site is built by Gly-9, Gly-11, Lys-12, Thr-13, and Thr-14. An NMP region spans residues 28-51; the sequence is SLGELIRQKGFVLGRDPIRGYLEA. The tract at residues 99-109 is LID; the sequence is GRGYPEGKVLE. Arg-100 provides a ligand contact to ATP.

It belongs to the adenylate kinase family. AK6 subfamily. In terms of assembly, interacts with uS11. Not a structural component of 40S pre-ribosomes, but transiently interacts with them by binding to uS11.

The enzyme catalyses AMP + ATP = 2 ADP. It catalyses the reaction ATP + H2O = ADP + phosphate + H(+). Its function is as follows. Broad-specificity nucleoside monophosphate (NMP) kinase that catalyzes the reversible transfer of the terminal phosphate group between nucleoside triphosphates and monophosphates. Also has ATPase activity. Involved in the late maturation steps of the 30S ribosomal particles, specifically 16S rRNA maturation. While NMP activity is not required for ribosome maturation, ATPase activity is. Associates transiently with small ribosomal subunit protein uS11. ATP hydrolysis breaks the interaction with uS11. May temporarily remove uS11 from the ribosome to enable a conformational change of the ribosomal RNA that is needed for the final maturation step of the small ribosomal subunit. This is Putative adenylate kinase from Methanothermobacter thermautotrophicus (strain ATCC 29096 / DSM 1053 / JCM 10044 / NBRC 100330 / Delta H) (Methanobacterium thermoautotrophicum).